Here is a 97-residue protein sequence, read N- to C-terminus: MSYYRWDGDDLILDCHLQPKASSDEFAGLHGERLKIRLTAPPVEGKANAHLMAFLAKAFGIPKSNVSLVSGELNRQKRVRLQAPKKLPDLPGLARPA.

Belongs to the UPF0235 family.

The chain is UPF0235 protein PFL_5841 from Pseudomonas fluorescens (strain ATCC BAA-477 / NRRL B-23932 / Pf-5).